The chain runs to 277 residues: Putative pyruvate, phosphate dikinase regulatory protein (277 aa).

151–158 (GISRTSKT) provides a ligand contact to ADP.

It belongs to the pyruvate, phosphate/water dikinase regulatory protein family. PDRP subfamily.

The enzyme catalyses N(tele)-phospho-L-histidyl/L-threonyl-[pyruvate, phosphate dikinase] + ADP = N(tele)-phospho-L-histidyl/O-phospho-L-threonyl-[pyruvate, phosphate dikinase] + AMP + H(+). The catalysed reaction is N(tele)-phospho-L-histidyl/O-phospho-L-threonyl-[pyruvate, phosphate dikinase] + phosphate + H(+) = N(tele)-phospho-L-histidyl/L-threonyl-[pyruvate, phosphate dikinase] + diphosphate. In terms of biological role, bifunctional serine/threonine kinase and phosphorylase involved in the regulation of the pyruvate, phosphate dikinase (PPDK) by catalyzing its phosphorylation/dephosphorylation. The sequence is that of Putative pyruvate, phosphate dikinase regulatory protein from Alkaliphilus oremlandii (strain OhILAs) (Clostridium oremlandii (strain OhILAs)).